We begin with the raw amino-acid sequence, 364 residues long: Histidinol-phosphate aminotransferase 1 (364 aa).

Lys-211 carries the N6-(pyridoxal phosphate)lysine modification.

The protein belongs to the class-II pyridoxal-phosphate-dependent aminotransferase family. Histidinol-phosphate aminotransferase subfamily. Homodimer. Pyridoxal 5'-phosphate is required as a cofactor.

The catalysed reaction is L-histidinol phosphate + 2-oxoglutarate = 3-(imidazol-4-yl)-2-oxopropyl phosphate + L-glutamate. Its pathway is amino-acid biosynthesis; L-histidine biosynthesis; L-histidine from 5-phospho-alpha-D-ribose 1-diphosphate: step 7/9. This chain is Histidinol-phosphate aminotransferase 1, found in Legionella pneumophila (strain Lens).